Consider the following 597-residue polypeptide: Putative Xaa-Pro dipeptidyl-peptidase (597 aa).

Catalysis depends on charge relay system residues serine 224, aspartate 336, and histidine 367.

It belongs to the peptidase S15 family.

The catalysed reaction is Hydrolyzes Xaa-Pro-|- bonds to release unblocked, N-terminal dipeptides from substrates including Ala-Pro-|-p-nitroanilide and (sequentially) Tyr-Pro-|-Phe-Pro-|-Gly-Pro-|-Ile.. The sequence is that of Putative Xaa-Pro dipeptidyl-peptidase from Bacillus anthracis.